The chain runs to 359 residues: Putative nucleotidyltransferase MAB21L1 (359 aa).

A ribonucleoside 5'-triphosphate contacts are provided by residues 23 to 24 (RK) and 63 to 66 (YEGL). 2 residues coordinate Mg(2+): Glu73 and Glu75. Residues Lys248 and 252 to 255 (SLLK) each bind a ribonucleoside 5'-triphosphate.

This sequence belongs to the mab-21 family. In terms of assembly, monomer. Homodecamer; composed of 2 back to back homopentamers. The protein may exist as monomer in solution and oiligomerizes upon ligand binding.

It is found in the nucleus. In terms of biological role, putative nucleotidyltransferase required for several aspects of embryonic development including normal development of the eye. It is unclear whether it displays nucleotidyltransferase activity in vivo. Binds single-stranded RNA (ssRNA). This Xenopus laevis (African clawed frog) protein is Putative nucleotidyltransferase MAB21L1 (mab21l1).